The primary structure comprises 182 residues: uncharacterized protein (182 aa).

Residues 17–34 form a helical membrane-spanning segment; the sequence is LSLVLFAVLSVLPLGGCA. TPR repeat units follow at residues 89-122 and 123-156; these read VDAA…TPDN and LRAL…NPEN.

The protein resides in the membrane. This is an uncharacterized protein from Sinorhizobium fredii (strain NBRC 101917 / NGR234).